Here is a 201-residue protein sequence, read N- to C-terminus: Inosine triphosphate pyrophosphatase (201 aa).

13–18 (TGNAKK) provides a ligand contact to ITP. Position 43 (E43) interacts with Mg(2+). Residues K55, 71–72 (DT), K88, 148–151 (FGWD), K171, and 176–177 (HR) each bind ITP.

This sequence belongs to the HAM1 NTPase family. As to quaternary structure, homodimer. Mg(2+) serves as cofactor. The cofactor is Mn(2+).

Its subcellular location is the cytoplasm. The catalysed reaction is ITP + H2O = IMP + diphosphate + H(+). It catalyses the reaction dITP + H2O = dIMP + diphosphate + H(+). The enzyme catalyses XTP + H2O = XMP + diphosphate + H(+). It carries out the reaction N(6)-hydroxy-dATP + H2O = N(6)-hydroxy-dAMP + diphosphate + H(+). Pyrophosphatase that hydrolyzes the non-canonical purine nucleotides inosine triphosphate (ITP), deoxyinosine triphosphate (dITP) as well as 2'-deoxy-N-6-hydroxylaminopurine triphosphate (dHAPTP) and xanthosine 5'-triphosphate (XTP) to their respective monophosphate derivatives. The enzyme does not distinguish between the deoxy- and ribose forms. Probably excludes non-canonical purines from RNA and DNA precursor pools, thus preventing their incorporation into RNA and DNA and avoiding chromosomal lesions. The sequence is that of Inosine triphosphate pyrophosphatase from Gallus gallus (Chicken).